The chain runs to 195 residues: Putative Tricorn-like protease N-terminal subunit (195 aa).

The protein belongs to the peptidase S41B family.

It is found in the cytoplasm. Its function is as follows. Degrades oligopeptides in a sequential manner. The chain is Putative Tricorn-like protease N-terminal subunit (triN) from Sulfurisphaera tokodaii (strain DSM 16993 / JCM 10545 / NBRC 100140 / 7) (Sulfolobus tokodaii).